Reading from the N-terminus, the 392-residue chain is Elongation factor Tu (392 aa).

Residues 10–202 (KVHVNVGTIG…VLDEYIEDPI (193 aa)) form the tr-type G domain. The tract at residues 19–26 (GHVDHGKT) is G1. 19–26 (GHVDHGKT) lines the GTP pocket. Thr-26 contributes to the Mg(2+) binding site. A G2 region spans residues 60–64 (GITIN). A G3 region spans residues 81 to 84 (DCPG). GTP-binding positions include 81 to 85 (DCPGH) and 136 to 139 (NKCD). The tract at residues 136–139 (NKCD) is G4. Residues 174–176 (SAL) form a G5 region.

The protein belongs to the TRAFAC class translation factor GTPase superfamily. Classic translation factor GTPase family. EF-Tu/EF-1A subfamily. In terms of assembly, monomer.

It localises to the cytoplasm. The catalysed reaction is GTP + H2O = GDP + phosphate + H(+). Its function is as follows. GTP hydrolase that promotes the GTP-dependent binding of aminoacyl-tRNA to the A-site of ribosomes during protein biosynthesis. This chain is Elongation factor Tu, found in Phytoplasma mali (strain AT).